The following is a 344-amino-acid chain: Zinc metalloproteinase nas-6 (344 aa).

The N-terminal stretch at 1-19 (MLDHVLLLTYCLVSTVVRS) is a signal peptide. The 195-residue stretch at 72–266 (NALKNKQLTW…VKINKLYSCK (195 aa)) folds into the Peptidase M12A domain. 5 disulfides stabilise this stretch: Cys-114–Cys-265, Cys-135–Cys-154, Cys-300–Cys-334, Cys-307–Cys-327, and Cys-314–Cys-331. Residue His-162 participates in Zn(2+) binding. The active site involves Glu-163. Residues His-166 and His-172 each contribute to the Zn(2+) site. The ShKT domain maps to 300-334 (CVDHFADCPHFAQYCTRASFFFVMKSYCPFTCKHC).

Requires Zn(2+) as cofactor. As to expression, expressed in pharyngeal and body wall muscles, intestine, hypodermis and pharyngeal mc2 cells.

The protein localises to the secreted. Metalloprotease. The protein is Zinc metalloproteinase nas-6 (nas-6) of Caenorhabditis elegans.